The chain runs to 308 residues: Isoaspartyl peptidase/L-asparaginase (308 aa).

At Met-1 the chain carries N-acetylmethionine. The active-site Nucleophile is the Thr-168. Residues 196 to 199 (RVGD) and 219 to 222 (TGHG) contribute to the substrate site.

Belongs to the Ntn-hydrolase family. As to quaternary structure, heterodimer of an alpha and beta chain produced by autocleavage. This heterodimer may then dimerize in turn, giving rise to a heterotetramer. Post-translationally, cleaved into an alpha and beta chain by autocatalysis; this activates the enzyme. The N-terminal residue of the beta subunit is responsible for the nucleophile hydrolase activity.

The protein localises to the cytoplasm. The catalysed reaction is L-asparagine + H2O = L-aspartate + NH4(+). The enzyme catalyses Cleavage of a beta-linked Asp residue from the N-terminus of a polypeptide.. Functionally, has both L-asparaginase and beta-aspartyl peptidase activity. May be involved in the production of L-aspartate, which can act as an excitatory neurotransmitter in some brain regions. Is highly active with L-Asp beta-methyl ester. Besides, has catalytic activity toward beta-aspartyl dipeptides and their methyl esters, including beta-L-Asp-L-Phe, beta-L-Asp-L-Phe methyl ester (aspartame), beta-L-Asp-L-Ala, beta-L-Asp-L-Leu and beta-L-Asp-L-Lys. Does not have aspartylglucosaminidase activity and is inactive toward GlcNAc-L-Asn. Likewise, has no activity toward glutamine. This is Isoaspartyl peptidase/L-asparaginase (ASRGL1) from Bos taurus (Bovine).